We begin with the raw amino-acid sequence, 123 residues long: Large ribosomal subunit protein bL19 (123 aa).

It belongs to the bacterial ribosomal protein bL19 family.

This protein is located at the 30S-50S ribosomal subunit interface and may play a role in the structure and function of the aminoacyl-tRNA binding site. The sequence is that of Large ribosomal subunit protein bL19 (rplS) from Treponema pallidum (strain Nichols).